A 2920-amino-acid chain; its full sequence is Cadherin-related hmr-1 (2920 aa).

A signal peptide spans 1 to 19; the sequence is MSWNILLILLISNLDEVLA. The Extracellular portion of the chain corresponds to 20–2779; sequence KTLLKLPSNA…AVSKLGISSP (2760 aa). N-linked (GlcNAc...) asparagine glycosylation is found at Asn-72, Asn-243, Asn-253, Asn-339, and Asn-508. Cadherin domains are found at residues 322–422, 425–530, 531–642, 643–747, 749–865, 871–979, 980–1093, 1097–1211, 1212–1335, 1336–1436, 1438–1546, 1548–1661, 1662–1772, and 1772–1874; these read SSRS…PPSF, SPLP…PPQF, AKQE…VPTF, TRPL…SAVF, PTSQ…KPEF, YSDI…SPQF, ERPS…APKW, PDCK…VPQF, TVDL…APSF, EEQK…APQF, QQKY…SPIF, ERLF…APFF, EKTR…APHI, and IHGA…EPYT. Asn-658, Asn-685, Asn-715, and Asn-826 each carry an N-linked (GlcNAc...) asparagine glycan. An N-linked (GlcNAc...) asparagine glycan is attached at Asn-1177. Asn-1417 carries an N-linked (GlcNAc...) asparagine glycan. A glycan (N-linked (GlcNAc...) asparagine) is linked at Asn-1646. Residues Asn-1935, Asn-2224, and Asn-2232 are each glycosylated (N-linked (GlcNAc...) asparagine). One can recognise an EGF-like 1 domain in the interval 2246-2283; that stretch reads APPACQHSLCHNDGVCHNTNPGFFCECRNDGLKGARCQ. Disulfide bonds link Cys-2250/Cys-2261, Cys-2255/Cys-2270, and Cys-2272/Cys-2282. In terms of domain architecture, Laminin G-like spans 2284–2478; it reads GTTRSFGGNG…AFEQNSEKGC (195 aa). Residues Asn-2307 and Asn-2332 are each glycosylated (N-linked (GlcNAc...) asparagine). Intrachain disulfides connect Cys-2452–Cys-2478, Cys-2501–Cys-2515, and Cys-2517–Cys-2526. Residues 2492 to 2527 form the EGF-like 2 domain; that stretch reads SLNHCIHGDCFADVQGSGAMVAKCVCDPGWGGARCE. Asn-2623 carries N-linked (GlcNAc...) asparagine glycosylation. Residues 2780-2800 form a helical membrane-spanning segment; that stretch reads AIILILVSLALLILLVMMMVV. Topologically, residues 2801 to 2920 are cytoplasmic; sequence YTRRSPGAFE…VTLESIESAQ (120 aa). Position 2839 is a phosphoserine (Ser-2839). The disordered stretch occupies residues 2858 to 2891; sequence IGGHPPHYPPRGMAPPKDDHELNSKIKDLETDQN. The segment covering 2873–2887 has biased composition (basic and acidic residues); it reads PKDDHELNSKIKDLE. Phosphoserine is present on Ser-2909. Residue Thr-2912 is modified to Phosphothreonine. 2 positions are modified to phosphoserine: Ser-2915 and Ser-2918.

In terms of assembly, monomer in solution. Isoform a is a component of a core catenin-cadherin complex consisting of hmr-1, hmp-1 and hmp-2; the complex localizes to adherens junctions. Isoform a interacts with hmp-2; the interaction is direct. Isoform a interacts (via intracellular domain) with jac-1. In terms of processing, phosphorylation at T-2912 increases the binding affinity for hmp-2. Post-translationally, sumoylated. Sumoylation prevents accumulation at adherens junctions and decreases the binding affinity for hmp-2. Expressed in epidermal cells (at protein level). In terms of tissue distribution, neuron-specific.

It localises to the cell membrane. It is found in the cell junction. The protein localises to the adherens junction. Its subcellular location is the cell projection. The protein resides in the dendrite. In terms of biological role, cadherins are calcium-dependent cell adhesion proteins. They preferentially interact with themselves in a homophilic manner in connecting cells; cadherins may thus contribute to the sorting of heterogeneous cell types. Required for adherens junction assembly and connecting adherens junctions to the cytoskeleton. Isoform a is required for cell migration during body enclosure and cell shape changes during body elongation. Required for proper localization of other junctional components, such as hmp-1, hmp-2, jac-1 and pac-1. Recruitment of pac-1 is required to establish cell polarity, independent of its role in cell adhesion. Required for primodial germ cell ingression and adherence to endodermal cells during gastrulation. Its function is as follows. Isoform b is involved in axonal guidance in a subset of motor neurons. The sequence is that of Cadherin-related hmr-1 from Caenorhabditis elegans.